Here is a 406-residue protein sequence, read N- to C-terminus: Arginine biosynthesis bifunctional protein ArgJ (406 aa).

Threonine 156, lysine 182, threonine 193, glutamate 279, asparagine 401, and threonine 406 together coordinate substrate. The active-site Nucleophile is the threonine 193.

The protein belongs to the ArgJ family. As to quaternary structure, heterotetramer of two alpha and two beta chains.

It localises to the cytoplasm. It catalyses the reaction N(2)-acetyl-L-ornithine + L-glutamate = N-acetyl-L-glutamate + L-ornithine. The catalysed reaction is L-glutamate + acetyl-CoA = N-acetyl-L-glutamate + CoA + H(+). The protein operates within amino-acid biosynthesis; L-arginine biosynthesis; L-ornithine and N-acetyl-L-glutamate from L-glutamate and N(2)-acetyl-L-ornithine (cyclic): step 1/1. It functions in the pathway amino-acid biosynthesis; L-arginine biosynthesis; N(2)-acetyl-L-ornithine from L-glutamate: step 1/4. Catalyzes two activities which are involved in the cyclic version of arginine biosynthesis: the synthesis of N-acetylglutamate from glutamate and acetyl-CoA as the acetyl donor, and of ornithine by transacetylation between N(2)-acetylornithine and glutamate. This chain is Arginine biosynthesis bifunctional protein ArgJ, found in Bacillus licheniformis (strain ATCC 14580 / DSM 13 / JCM 2505 / CCUG 7422 / NBRC 12200 / NCIMB 9375 / NCTC 10341 / NRRL NRS-1264 / Gibson 46).